The primary structure comprises 553 residues: Protein Early 65 kDa (553 aa).

It localises to the host cytoplasm. In terms of biological role, may participate in the recruitment of G-actin to the host nucleus. In Autographa californica nuclear polyhedrosis virus (AcMNPV), this protein is Protein Early 65 kDa (HE65).